The primary structure comprises 102 residues: NADH-quinone oxidoreductase subunit K 1 (102 aa).

A run of 3 helical transmembrane segments spans residues 5-25 (FEHV…CVLV), 30-50 (LIML…AFVG), and 65-85 (LVIM…VVYL).

It belongs to the complex I subunit 4L family. In terms of assembly, NDH-1 is composed of 14 different subunits. Subunits NuoA, H, J, K, L, M, N constitute the membrane sector of the complex.

It is found in the cell inner membrane. The enzyme catalyses a quinone + NADH + 5 H(+)(in) = a quinol + NAD(+) + 4 H(+)(out). NDH-1 shuttles electrons from NADH, via FMN and iron-sulfur (Fe-S) centers, to quinones in the respiratory chain. The immediate electron acceptor for the enzyme in this species is believed to be ubiquinone. Couples the redox reaction to proton translocation (for every two electrons transferred, four hydrogen ions are translocated across the cytoplasmic membrane), and thus conserves the redox energy in a proton gradient. The sequence is that of NADH-quinone oxidoreductase subunit K 1 from Geobacter metallireducens (strain ATCC 53774 / DSM 7210 / GS-15).